The chain runs to 462 residues: Elongation factor 1-alpha 1 (462 aa).

G2 is modified (n,N,N-trimethylglycine). The region spanning 5-242 (KTHINIVVIG…DCILPPTRPT (238 aa)) is the tr-type G domain. Positions 14 to 21 (GHVDSGKS) are G1. 14–21 (GHVDSGKS) serves as a coordination point for GTP. Position 36 is an N6,N6,N6-trimethyllysine; alternate (K36). An N6,N6-dimethyllysine; alternate modification is found at K36. At K36 the chain carries N6-methyllysine; alternate. At K55 the chain carries N6,N6-dimethyllysine. The segment at 70–74 (GITID) is G2. K79 is subject to N6,N6,N6-trimethyllysine; by EEF1AKMT1. The tract at residues 91–94 (DAPG) is G3. 153–156 (NKMD) provides a ligand contact to GTP. Residues 153 to 156 (NKMD) form a G4 region. K165 is subject to N6,N6,N6-trimethyllysine; alternate; by EEF1AKMT3. K165 is modified (N6,N6-dimethyllysine; alternate; by EEF1AKMT3). N6-acetyllysine; alternate is present on K165. Position 165 is an N6-methyllysine; alternate; by EEF1AKMT3 (K165). K172 carries the N6-acetyllysine modification. 194 to 196 (SGW) provides a ligand contact to GTP. The tract at residues 194–196 (SGW) is G5. K273 bears the N6-acetyllysine mark. Residue S300 is modified to Phosphoserine; by TGFBR1. E301 carries the 5-glutamyl glycerylphosphorylethanolamine modification. K318 carries the post-translational modification N6,N6,N6-trimethyllysine; by EEF1AKMT2. E374 is modified (5-glutamyl glycerylphosphorylethanolamine). K385 is covalently cross-linked (Glycyl lysine isopeptide (Lys-Gly) (interchain with G-Cter in ubiquitin)). K392 is modified (N6-acetyllysine; alternate). K392 carries the post-translational modification N6-succinyllysine; alternate. T432 bears the Phosphothreonine; by PASK mark. K439 carries the post-translational modification N6-acetyllysine.

The protein belongs to the TRAFAC class translation factor GTPase superfamily. Classic translation factor GTPase family. EF-Tu/EF-1A subfamily. Found in a nuclear export complex with XPO5, EEF1A1, Ran and aminoacylated tRNA. Interacts with PARP1 and TXK. Interacts with KARS1. May interact with ERGIC2. Interacts with IFIT1 (via TPR repeats 4-7). Interacts with DLC1, facilitating distribution to the membrane periphery and ruffles upon growth factor stimulation. Interacts with ZPR1; the interaction occurs in a epidermal growth factor (EGF)-dependent manner. Interacts with PPP1R16B. Interacts with SPHK1 and SPHK2; both interactions increase SPHK1 and SPHK2 kinase activity. Interacts with guanyl-nucleotide exchange factor EEF1B2. Interacts (via middle-region) with HTATIP2 (via N-terminus); the interaction is direct and competes with EEF1A1 binding to guanyl-nucleotide exchange factor EEF1B2, thereby inhibiting GDP for GTP exchange and reactivation of EEF1A1. Interacts with tRNA. Post-translationally, ISGylated. In terms of processing, phosphorylated by TXK. Phosphorylation by PASK increases translation efficiency. Phosphorylated by ROCK2. Phosphorylation by TGFBR1 inhibits translation elongation. Trimethylated at Lys-79 by EEF1AKMT1. Methylated at Lys-165 by EEF1AKMT3, methylation by EEF1AKMT3 is dynamic as well as inducible by stress conditions, such as ER-stress, and plays a regulatory role on mRNA translation. Trimethylated at Lys-318 by EEF1AKMT2. Mono-, di-, and trimethylated at Lys-36 by EEF1AKMT4; trimethylated form is predominant. Methylation by EEF1AKMT4 contributes to the fine-tuning of translation rates for a subset of tRNAs. Trimethylated at Gly-2 by METTL13. Mono- and dimethylated at Lys-55 by METTL13; dimethylated form is predominant. Post-translationally, ubiquitinated at Lys-385 by RNF14 in response to ribosome collisions (ribosome stalling), leading to its degradation by the proteasome and rescue of stalled ribosomes.

It localises to the cytoplasm. It is found in the nucleus. The protein localises to the nucleolus. The protein resides in the cell membrane. It carries out the reaction GTP + H2O = GDP + phosphate + H(+). Translation elongation factor that catalyzes the GTP-dependent binding of aminoacyl-tRNA (aa-tRNA) to the A-site of ribosomes during the elongation phase of protein synthesis. Base pairing between the mRNA codon and the aa-tRNA anticodon promotes GTP hydrolysis, releasing the aa-tRNA from EEF1A1 and allowing its accommodation into the ribosome. The growing protein chain is subsequently transferred from the P-site peptidyl tRNA to the A-site aa-tRNA, extending it by one amino acid through ribosome-catalyzed peptide bond formation. Also plays a role in the positive regulation of IFNG transcription in T-helper 1 cells as part of an IFNG promoter-binding complex with TXK and PARP1. Also plays a role in cytoskeleton organization by promoting actin bundling. The sequence is that of Elongation factor 1-alpha 1 (EEF1A1) from Equus caballus (Horse).